A 380-amino-acid chain; its full sequence is MSSPDGGYASDDQNQGKCSVPIMMTGLGQCQWAEPMTSLGEGKLKSDAGSANSRSKAEARIRRPMNAFMVWAKDERKRLAQQNPDLHNAELSKMLGKSWKSLTLAEKRPFVEEAERLRVQHMQDHPNYKYRPRRRKQVKRMKRAENGFMHMAEAQESAVLGADGRMCLENFSLGYHEQTYPHGQVPQSSHYREPQAVAPHYDGYSLPTPESSPLDLAEADPVFFTSPAQDECQMMPYSYNGSYPHQQNSMLVRQMPQTEQMGQVSPVQGMMACQSSPHMYYGQMYLPGSARHHQLHQAGQPSPPPEAQQMGRADHIQPADMLAEVDRTEFEQYLSYVAKSDLGMHYHAQESVVPTADNGPISSVLSDASTAVYYCNYPSA.

Disordered regions lie at residues 1 to 20 (MSSPDGGYASDDQNQGKCSV) and 40 to 59 (GEGKLKSDAGSANSRSKAEA). Residues 61-129 (IRRPMNAFMV…QHMQDHPNYK (69 aa)) constitute a DNA-binding region (HMG box). Residues 264–379 (VSPVQGMMAC…TAVYYCNYPS (116 aa)) enclose the Sox C-terminal domain. The tract at residues 292-312 (HHQLHQAGQPSPPPEAQQMGR) is disordered. The short motif at 328 to 336 (TEFEQYLSY) is the 9aaTAD element. A required for transcriptional activity and interaction with ctnnb1 region spans residues 329 to 334 (EFEQYL).

Interacts (via C-terminus) with ctnnb1/beta-catenin (via Armadillo repeats); this interaction is required for inhibition of wnt-signaling. In terms of tissue distribution, in early gastrulae, expressed in the vegetal but not animal hemisphere. The vegetal region is fated to become endoderm, and endodermal expression continues throughout gastrulation and neurulation. At tailbud stages, expression is down-regulated and becomes restricted to the most posterior endoderm and the future liver/gall bladder region. By 3-7 days, endodermal expression is restricted to the gall bladder bud. Also expressed in the embryonic gut, with strong expression in the posterior gut during tailbud stages, but by stage 40, expression rises again in the anterior gut. Expressed at a low level in the adult kidney and spleen.

Its subcellular location is the nucleus. Functionally, transcriptional activator. Binds to the DNA sequence 5'-AACAAT-3'. All of the sox17 proteins are required for embryonic endoderm development and gastrulation movements, and show some redundancy in function. In addition, the sox17 proteins have distinct but overlapping roles in later gut development. Acts downstream of vegt-signaling in endoderm differentiation to induce a range of endodermal genes both directly (including endodermin and dhh/chh) and indirectly. Also represses wnt-responsive genes to inhibit wnt/beta-catenin signaling. The protein is Transcription factor Sox-17-alpha-A (sox17a-a) of Xenopus laevis (African clawed frog).